A 425-amino-acid polypeptide reads, in one-letter code: Protein-glutamate methylesterase/protein-glutamine glutaminase (425 aa).

One can recognise a Response regulatory domain in the interval 22 to 140 (RVMVVDDSVV…EVAAADIFRH (119 aa)). Asp-73 carries the 4-aspartylphosphate modification. Disordered regions lie at residues 150 to 174 (AAKRRRPATVASPPPDHDDYGSNAS) and 203 to 223 (VQREQQPRSAQAARAMSRPQP). The CheB-type methylesterase domain occupies 221-417 (PQPTLRSFSA…PLQQIAPKLV (197 aa)). Catalysis depends on residues Ser-241, His-269, and Asp-365.

The protein belongs to the CheB family. Phosphorylated by CheA. Phosphorylation of the N-terminal regulatory domain activates the methylesterase activity.

The protein resides in the cytoplasm. It catalyses the reaction [protein]-L-glutamate 5-O-methyl ester + H2O = L-glutamyl-[protein] + methanol + H(+). It carries out the reaction L-glutaminyl-[protein] + H2O = L-glutamyl-[protein] + NH4(+). In terms of biological role, involved in chemotaxis. Part of a chemotaxis signal transduction system that modulates chemotaxis in response to various stimuli. Catalyzes the demethylation of specific methylglutamate residues introduced into the chemoreceptors (methyl-accepting chemotaxis proteins or MCP) by CheR. Also mediates the irreversible deamidation of specific glutamine residues to glutamic acid. This is Protein-glutamate methylesterase/protein-glutamine glutaminase from Nitrobacter winogradskyi (strain ATCC 25391 / DSM 10237 / CIP 104748 / NCIMB 11846 / Nb-255).